We begin with the raw amino-acid sequence, 241 residues long: Tubulin-like protein alpha-4B (241 aa).

Residues 1–10 (MRHQQTERQD) are compositionally biased toward basic and acidic residues. The tract at residues 1–20 (MRHQQTERQDPSQPLSRQHG) is disordered. Position 10 (Asp-10) interacts with GTP. Asp-10 contacts Mg(2+). Over residues 11-20 (PSQPLSRQHG) the composition is skewed to polar residues. Residues Ser-79, Gly-83, Thr-84, Thr-118, Asn-145, and Asn-167 each coordinate GTP. The active site involves Glu-193.

This sequence belongs to the tubulin family. The cofactor is Mg(2+). In terms of processing, some glutamate residues at the C-terminus are polyglutamylated, resulting in polyglutamate chains on the gamma-carboxyl group. Polyglutamylation plays a key role in microtubule severing by spastin (SPAST). SPAST preferentially recognizes and acts on microtubules decorated with short polyglutamate tails: severing activity by SPAST increases as the number of glutamates per tubulin rises from one to eight, but decreases beyond this glutamylation threshold. Glutamylation is also involved in cilia motility. Some glutamate residues at the C-terminus are monoglycylated but not polyglycylated due to the absence of functional TTLL10 in human. Monoglycylation is mainly limited to tubulin incorporated into cilia and flagella axonemes, which is required for their stability and maintenance. Flagella glycylation controls sperm motility. Both polyglutamylation and monoglycylation can coexist on the same protein on adjacent residues, and lowering glycylation levels increases polyglutamylation, and reciprocally.

The protein localises to the cytoplasm. It is found in the cytoskeleton. The enzyme catalyses GTP + H2O = GDP + phosphate + H(+). Functionally, tubulin is the major constituent of microtubules, a cylinder consisting of laterally associated linear protofilaments composed ofalpha- and beta-tubulin heterodimers. In Homo sapiens (Human), this protein is Tubulin-like protein alpha-4B (TUBA4B).